Consider the following 1381-residue polypeptide: MTAPNSTPASSRKRVRRRRQDKPALSAKLVLDAHVKGDVGVIATDLFADLFPHLWANGDSQDTVHVAIAPWAPSQTPEANNWSIVPVIRSSTVAPSTVQFSPSSLALQSFATHLQQAAPSKLSGHNKGGIEILILDVSPIELDTVFVNLDGELAKRLEDGEGTFFREHPVNGKGKARADATPEEHLTAALRTALGTLKIVHSGDFFPLPLPPHPVTHQPPNPGRITLCEPVAQGILAPTTKIIVSRVRTSKTKRSSASGQQQGRKLNGVAEDDEDAYFSAAEEDRDSKTNAQTAETDADDTEFEPQAGEDEDNLSDDSLDEIISLQVPTLPTTVTGQSTIGTGTPTMLRGRKTNGPGSVISSYTATTARPDRPRGRLFKAHGLMKPIPPDLLHPKPTPEDDEEACIYVDMRDLTRVGCFSGDWIRVEAASEPPSNGLGAFGLGSFVEQEADEINWRPARVFGLPEGYSSRSATRSHHSRHDSRNSSFFEAQSQKSNPPAYTSPILLANLDNPPYLRLSPIKRPSSSIIKGVAAQSKTSSTLKPPFAREVILQHVRTPTAVERDVQSAVMAGLKHYFERRLRVLRTGDLIAVPIDTQLGKALQESTIPGEDSAIDEVLGLIAATRPGQSLHYDDVAWFRVGHVQAMKQDTTEAVDGEEAEDLWGGIACVDISLTHLEQSGSVTGRIPGTISNSWQYYLGIRKLPKHQQNPGLPAQLQTLEPEKQYVSSLRRKLRELMAAATSKPALHLNLPPLAILLVSTQRHIGKAATAMQACSDIGLHTFAIDAYDIVNDGGGGGGSDVKTAGFLTSRAERAMSCGPESCVLLVRHIEALTADRMVSSIKEILADARVLIATTTEVEKVPDGIRALFTHELEMSAPDEQEREGILSSILADRGIGLDHGVDLSGIALKTAALVAGDLVDVVDRALVAQRSRLEKLTAKATGSITFRDVQLAGGPAASGLTKQDFELAVDAARKNFADSIGAPKIPNVTWDDVGGLGNVKDAITETIQLPLERPELFAKGMKKRSGILFYGPPGTGKTLLAKAIATEYSLNFFSVKGPELLNMYIGESEANVRRVFQRARDARPCVVFFDELDSVAPKRGNQGDSGGVMDRIVSQLLAELDGMSGGEGGGGGVFVIGATNRPDLLDPALLRPGRFDKMLYLGVSDTHDKQVTIMEALTRKFTLHPTVSLRSVAERLPFTYTGADFYALCSDAMLKAVTRQATLVDTKIRELNAAAGPEGKQISTAYFFDHYATKEDISVMVTEQDFLDAHRELVPSVSAGELEHYEQVRAMFEGAKDKDKKKEGAGGDGNGVDGLESGNRNGMLAITMGDDGAGAESTKKDGKGKGKAADNEVNGAGEGKGKEGVSPFQESGGDEDEGLYD.

Residues 1-10 (MTAPNSTPAS) are compositionally biased toward polar residues. Disordered regions lie at residues 1 to 23 (MTAPNSTPASSRKRVRRRRQDKP), 247 to 315 (VRTS…DNLS), 333 to 374 (TVTG…DRPR), and 467 to 499 (YSSRSATRSHHSRHDSRNSSFFEAQSQKSNPPA). The segment covering 11 to 20 (SRKRVRRRRQ) has biased composition (basic residues). Composition is skewed to acidic residues over residues 270–284 (AEDDEDAYFSAAEED) and 296–315 (TDADDTEFEPQAGEDEDNLS). Composition is skewed to polar residues over residues 333–345 (TVTGQSTIGTGTP), 355–367 (GPGSVISSYTATT), and 487–499 (FFEAQSQKSNPPA). An ATP-binding site is contributed by 1031–1038 (GPPGTGKT). 2 stretches are compositionally biased toward basic and acidic residues: residues 1294–1305 (GAKDKDKKKEGA) and 1337–1350 (STKKDGKGKGKAAD). Residues 1294–1381 (GAKDKDKKKE…GGDEDEGLYD (88 aa)) are disordered. Residues 1372 to 1381 (GGDEDEGLYD) are compositionally biased toward acidic residues.

The protein belongs to the AAA ATPase family. In terms of assembly, interacts with PEX1; forming the PEX1-PEX6 AAA ATPase complex, which is composed of a heterohexamer formed by a trimer of PEX1-PEX6 dimers.

It is found in the cytoplasm. Its subcellular location is the cytosol. It localises to the peroxisome membrane. It carries out the reaction ATP + H2O = ADP + phosphate + H(+). In terms of biological role, component of the PEX1-PEX6 AAA ATPase complex, a protein dislocase complex that mediates the ATP-dependent extraction of the PEX5 receptor from peroxisomal membranes, an essential step for PEX5 recycling. Specifically recognizes PEX5 monoubiquitinated at 'Cys-6', and pulls it out of the peroxisome lumen through the PEX2-PEX10-PEX12 retrotranslocation channel. Extraction by the PEX1-PEX6 AAA ATPase complex is accompanied by unfolding of the TPR repeats and release of bound cargo from PEX5. The chain is Peroxisomal ATPase PEX6 (pex-6) from Neurospora crassa (strain ATCC 24698 / 74-OR23-1A / CBS 708.71 / DSM 1257 / FGSC 987).